The following is a 101-amino-acid chain: uncharacterized protein (101 aa).

This is an uncharacterized protein from Saccharolobus islandicus (Sulfolobus islandicus).